The chain runs to 339 residues: Meiotic recombination protein rec7 (339 aa).

In terms of biological role, may be involved primarily in the early steps of meiotic recombination. The sequence is that of Meiotic recombination protein rec7 (rec7) from Schizosaccharomyces pombe (strain 972 / ATCC 24843) (Fission yeast).